Consider the following 355-residue polypeptide: MFKLTSSPHIHSGKLTARIMLWVIFGMLPALAVQVYYFGFGVLIQICLAVALALILEFAVTKLRKKPSLFYISDFSVILTALILAMAIPPYAPYWVILIGTFCAVILGKHVYGGLGQNLFNPAMVGYVVLLISFPVQMTGWMPPISLLHEPPTFGDSLGLIFSGVTGDGFSLSQLVSSIDGLSSATPLDSAKTWLKSGGSATDLLNQPIFLPGLEAGLGWLQVNLAFFIGGLFLIWKKAIHWQTPVAILLSLGIFCGLFDLFGNAQAVGFFAQLFSGAMMFGAFFIATDPVTAPVTPKGKWVFGILIGLLICLIRQFGNYPDGVAFAVLLANICVPLIDQYTRPRVAGYGLNGRN.

5 consecutive transmembrane segments (helical) span residues 13–33, 35–55, 77–97, 98–118, and 128–148; these read GKLTARIMLWVIFGMLPALAV, VYYFGFGVLIQICLAVALALI, VILTALILAMAIPPYAPYWVI, LIGTFCAVILGKHVYGGLGQN, and VVLLISFPVQMTGWMPPISLL. At T186 the chain carries FMN phosphoryl threonine. 5 consecutive transmembrane segments (helical) span residues 216 to 236, 245 to 265, 267 to 287, 294 to 314, and 318 to 338; these read AGLGWLQVNLAFFIGGLFLIW, PVAILLSLGIFCGLFDLFGNA, AVGFFAQLFSGAMMFGAFFIA, PVTPKGKWVFGILIGLLICLI, and GNYPDGVAFAVLLANICVPLI.

Belongs to the NqrB/RnfD family. In terms of assembly, the complex is composed of six subunits: RnfA, RnfB, RnfC, RnfD, RnfE and RnfG. FMN serves as cofactor.

Its subcellular location is the cell inner membrane. In terms of biological role, part of a membrane-bound complex that couples electron transfer with translocation of ions across the membrane. The polypeptide is Ion-translocating oxidoreductase complex subunit D (Actinobacillus succinogenes (strain ATCC 55618 / DSM 22257 / CCUG 43843 / 130Z)).